A 349-amino-acid chain; its full sequence is sn-glycerol-3-phosphate import ATP-binding protein UgpC (349 aa).

Residues 4–235 (VTLTAVRKVY…PASTFVASFM (232 aa)) form the ABC transporter domain. 37–44 (GPSGCGKS) lines the ATP pocket.

Belongs to the ABC transporter superfamily. sn-glycerol-3-phosphate importer (TC 3.A.1.1.3) family. In terms of assembly, the complex is composed of two ATP-binding proteins (UgpC), two transmembrane proteins (UgpA and UgpE) and a solute-binding protein (UgpB).

Its subcellular location is the cell inner membrane. The enzyme catalyses sn-glycerol 3-phosphate(out) + ATP + H2O = sn-glycerol 3-phosphate(in) + ADP + phosphate + H(+). Functionally, part of the ABC transporter complex UgpBAEC involved in sn-glycerol-3-phosphate (G3P) import. Responsible for energy coupling to the transport system. This chain is sn-glycerol-3-phosphate import ATP-binding protein UgpC, found in Jannaschia sp. (strain CCS1).